The primary structure comprises 169 residues: Deoxyuridine 5'-triphosphate nucleotidohydrolase (169 aa).

Positions 1-10 (MAENQINSPE) are enriched in polar residues. The segment at 1-25 (MAENQINSPEITEPSPKVQKLDHPE) is disordered. Substrate is bound by residues 91–93 (RSG), 105–108 (GVID), glycine 116, arginine 159, and 164–165 (FG).

Belongs to the dUTPase family. As to quaternary structure, homodimer. Mg(2+) is required as a cofactor. In terms of tissue distribution, vegetative and floral merismatic cells and provascular and vascular merismatic derivatives.

The catalysed reaction is dUTP + H2O = dUMP + diphosphate + H(+). The protein operates within pyrimidine metabolism; dUMP biosynthesis; dUMP from dCTP (dUTP route): step 2/2. Functionally, this enzyme is involved in nucleotide metabolism: it produces dUMP, the immediate precursor of thymidine nucleotides and it decreases the intracellular concentration of dUTP so that uracil cannot be incorporated into DNA. It may have as well a metabolic role in merismatic cells. This is Deoxyuridine 5'-triphosphate nucleotidohydrolase from Solanum lycopersicum (Tomato).